A 567-amino-acid polypeptide reads, in one-letter code: ATP-dependent RNA helicase HAS1 (567 aa).

The disordered stretch occupies residues Met-1 to Gly-109. A compositionally biased stretch (acidic residues) spans Glu-30–Asp-40. The stretch at Glu-35–Tyr-88 forms a coiled coil. Residues Asp-103 to Ala-131 carry the Q motif motif. A Helicase ATP-binding domain is found at Ile-134–Tyr-310. Ala-147 to Thr-154 contacts ATP. A DEAD box motif is present at residues Asp-257–Asp-260. The region spanning Gly-324–Val-484 is the Helicase C-terminal domain.

It belongs to the DEAD box helicase family. DDX18/HAS1 subfamily. In terms of assembly, associates in the nucleolus with the 60S and pre-60S ribosomal subunits.

The protein resides in the nucleus. The protein localises to the nucleolus. It catalyses the reaction ATP + H2O = ADP + phosphate + H(+). In terms of biological role, ATP-dependent RNA helicase involved in 40S ribosomal subunit biogenesis. Required for the processing and cleavage of 35S pre-rRNA at sites A0, A1, and A2, leading to mature 18S rRNA. This is ATP-dependent RNA helicase HAS1 (HAS1) from Scheffersomyces stipitis (strain ATCC 58785 / CBS 6054 / NBRC 10063 / NRRL Y-11545) (Yeast).